We begin with the raw amino-acid sequence, 293 residues long: MDSDWESTFEFVSETGQIKKRGSKTSELKQNETTDAVVVNNEKVKKRRNSKDSHIVLAKEIFAVAFFSLGMSCLLMADVSTFLWGINNPNSQQSKSIGSNIDQMSSEEFQQKVHDYMSEIQRTGRDKRPSRRFVDSARFYILSEIEPIELALRREWIPDHSFFEGVQEFIRGMEWENTFEEELFVRGVPNFDHDFESEEMTLKTTLDGKNYNNQFLNLGRKEIIGKHHSMEYFISGRTLIRLVKNEGQELSRTEYYLKHGDLHVYDKRGNLDCTRVYRSPTISPMLQSKIRQF.

A helical transmembrane segment spans residues 55-77 (IVLAKEIFAVAFFSLGMSCLLMA).

Its subcellular location is the membrane. This is an uncharacterized protein from Caenorhabditis elegans.